A 351-amino-acid chain; its full sequence is Anthranilate phosphoribosyltransferase (351 aa).

Residues glycine 80, 83–84, threonine 88, 90–93, 108–116, and serine 120 contribute to the 5-phospho-alpha-D-ribose 1-diphosphate site; these read GD, NVST, and KHGNRSVTS. Residue glycine 80 participates in anthranilate binding. Residue serine 92 coordinates Mg(2+). Position 111 (asparagine 111) interacts with anthranilate. Arginine 166 contacts anthranilate. Mg(2+) contacts are provided by aspartate 229 and glutamate 230.

The protein belongs to the anthranilate phosphoribosyltransferase family. In terms of assembly, homodimer. Mg(2+) serves as cofactor.

The enzyme catalyses N-(5-phospho-beta-D-ribosyl)anthranilate + diphosphate = 5-phospho-alpha-D-ribose 1-diphosphate + anthranilate. It functions in the pathway amino-acid biosynthesis; L-tryptophan biosynthesis; L-tryptophan from chorismate: step 2/5. Its function is as follows. Catalyzes the transfer of the phosphoribosyl group of 5-phosphorylribose-1-pyrophosphate (PRPP) to anthranilate to yield N-(5'-phosphoribosyl)-anthranilate (PRA). The polypeptide is Anthranilate phosphoribosyltransferase (Prosthecochloris aestuarii (strain DSM 271 / SK 413)).